The sequence spans 165 residues: Putative 1,2-phenylacetyl-CoA epoxidase, subunit D (165 aa).

In terms of assembly, monomer.

It participates in aromatic compound metabolism; phenylacetate degradation. Functionally, possible component of 1,2-phenylacetyl-CoA epoxidase multicomponent enzyme system which catalyzes the reduction of phenylacetyl-CoA (PA-CoA) to form 1,2-epoxyphenylacetyl-CoA. The subunit D may have a function related to the maturation of the monooxygenase complex, rather than direct involvement in catalysis. PaaD could assist either in maturation of PaaE or PaaA. The polypeptide is Putative 1,2-phenylacetyl-CoA epoxidase, subunit D (paaD) (Escherichia coli (strain K12)).